The sequence spans 136 residues: Frataxin, mitochondrial (136 aa).

The protein belongs to the frataxin family. Monomer. Oligomer.

It localises to the mitochondrion. It catalyses the reaction 4 Fe(2+) + O2 + 4 H(+) = 4 Fe(3+) + 2 H2O. Functionally, promotes the biosynthesis of heme as well as the assembly and repair of iron-sulfur clusters by delivering Fe(2+) to proteins involved in these pathways. May play a role in the protection against iron-catalyzed oxidative stress through its ability to catalyze the oxidation of Fe(2+) to Fe(3+). May be able to store large amounts of the metal in the form of a ferrihydrite mineral by oligomerization. This Caenorhabditis elegans protein is Frataxin, mitochondrial (frh-1).